Reading from the N-terminus, the 228-residue chain is Biosynthetic peptidoglycan transglycosylase (228 aa).

The helical transmembrane segment at 8–28 (GVAALLALFLLYQLWIFGHIV) threads the bilayer.

Belongs to the glycosyltransferase 51 family.

Its subcellular location is the cell inner membrane. The enzyme catalyses [GlcNAc-(1-&gt;4)-Mur2Ac(oyl-L-Ala-gamma-D-Glu-L-Lys-D-Ala-D-Ala)](n)-di-trans,octa-cis-undecaprenyl diphosphate + beta-D-GlcNAc-(1-&gt;4)-Mur2Ac(oyl-L-Ala-gamma-D-Glu-L-Lys-D-Ala-D-Ala)-di-trans,octa-cis-undecaprenyl diphosphate = [GlcNAc-(1-&gt;4)-Mur2Ac(oyl-L-Ala-gamma-D-Glu-L-Lys-D-Ala-D-Ala)](n+1)-di-trans,octa-cis-undecaprenyl diphosphate + di-trans,octa-cis-undecaprenyl diphosphate + H(+). It participates in cell wall biogenesis; peptidoglycan biosynthesis. Functionally, peptidoglycan polymerase that catalyzes glycan chain elongation from lipid-linked precursors. The chain is Biosynthetic peptidoglycan transglycosylase from Laribacter hongkongensis (strain HLHK9).